A 502-amino-acid polypeptide reads, in one-letter code: Keratin, type II cytoskeletal 8 (502 aa).

The head stretch occupies residues 1 to 98 (MSVRSTKVTY…DPSIQQVRTE (98 aa)). Ser-13, Ser-26, Ser-37, and Ser-40 each carry phosphoserine. The tract at residues 99 to 134 (EKEQIKTLNNKFASFIDKVRFLEQQNKMLETKWNLL) is coil 1A. An IF rod domain is found at 99 to 410 (EKEQIKTLNN…KLLEGEESRL (312 aa)). Positions 135-151 (QNQKTTRSNMDGMFEAY) are linker 1. A coil 1B region spans residues 152–243 (ISNLRRQLDG…QLYEEELREM (92 aa)). The tract at residues 244–267 (QSQISDTSVVLSMDNNRSLDLDGI) is linker 12. The segment at 268-406 (IAEVRAQYED…ATYRKLLEGE (139 aa)) is coil 2. Residues 269-390 (AEVRAQYEDV…DYQELMNVKL (122 aa)) are necessary for interaction with PNN. Residues 407 to 502 (ESRLESGFQN…SESSDVFSKP (96 aa)) are tail. Phosphoserine occurs at positions 425, 428, 436, and 444.

This sequence belongs to the intermediate filament family. In terms of assembly, heterotetramer of two type I and two type II keratins. Keratin-8 associates with keratin-18. As to expression, expressed in oocytes, eggs, embryos, liver and intestinal mucosa.

It localises to the cytoplasm. It is found in the nucleus. The protein localises to the nucleoplasm. The protein resides in the nucleus matrix. Functionally, together with KRT19, helps to link the contractile apparatus to dystrophin at the costameres of striated muscle. This is Keratin, type II cytoskeletal 8 from Xenopus laevis (African clawed frog).